A 91-amino-acid chain; its full sequence is Aspartyl/glutamyl-tRNA(Asn/Gln) amidotransferase subunit C (91 aa).

A disordered region spans residues leucine 68–serine 91.

This sequence belongs to the GatC family. As to quaternary structure, heterotrimer of A, B and C subunits.

It catalyses the reaction L-glutamyl-tRNA(Gln) + L-glutamine + ATP + H2O = L-glutaminyl-tRNA(Gln) + L-glutamate + ADP + phosphate + H(+). It carries out the reaction L-aspartyl-tRNA(Asn) + L-glutamine + ATP + H2O = L-asparaginyl-tRNA(Asn) + L-glutamate + ADP + phosphate + 2 H(+). Allows the formation of correctly charged Asn-tRNA(Asn) or Gln-tRNA(Gln) through the transamidation of misacylated Asp-tRNA(Asn) or Glu-tRNA(Gln) in organisms which lack either or both of asparaginyl-tRNA or glutaminyl-tRNA synthetases. The reaction takes place in the presence of glutamine and ATP through an activated phospho-Asp-tRNA(Asn) or phospho-Glu-tRNA(Gln). This is Aspartyl/glutamyl-tRNA(Asn/Gln) amidotransferase subunit C from Halobacterium salinarum (strain ATCC 29341 / DSM 671 / R1).